The sequence spans 518 residues: Glutamate--cysteine ligase (518 aa).

It belongs to the glutamate--cysteine ligase type 1 family. Type 1 subfamily.

It catalyses the reaction L-cysteine + L-glutamate + ATP = gamma-L-glutamyl-L-cysteine + ADP + phosphate + H(+). It functions in the pathway sulfur metabolism; glutathione biosynthesis; glutathione from L-cysteine and L-glutamate: step 1/2. This Salmonella gallinarum (strain 287/91 / NCTC 13346) protein is Glutamate--cysteine ligase.